We begin with the raw amino-acid sequence, 1324 residues long: DNA-directed RNA polymerase subunit beta' (1324 aa).

Zn(2+) contacts are provided by Cys219, Cys292, Cys299, and Cys302. The tract at residues 1293–1324 (ARDFEFASSDVEEDELTEEDDDYGDEEEEDAF) is disordered. The segment covering 1302–1324 (DVEEDELTEEDDDYGDEEEEDAF) has biased composition (acidic residues).

It belongs to the RNA polymerase beta' chain family. RpoC2 subfamily. As to quaternary structure, in cyanobacteria the RNAP catalytic core is composed of 2 alpha, 1 beta, 1 beta', 1 gamma and 1 omega subunit. When a sigma factor is associated with the core the holoenzyme is formed, which can initiate transcription. Requires Zn(2+) as cofactor.

It carries out the reaction RNA(n) + a ribonucleoside 5'-triphosphate = RNA(n+1) + diphosphate. In terms of biological role, DNA-dependent RNA polymerase catalyzes the transcription of DNA into RNA using the four ribonucleoside triphosphates as substrates. This is DNA-directed RNA polymerase subunit beta' from Thermosynechococcus vestitus (strain NIES-2133 / IAM M-273 / BP-1).